Reading from the N-terminus, the 321-residue chain is MSGEQTEQISKDKAVAAEQARKEQIAEGKKAAESPEVERRKKNIAEIAKLNEKAREAKKQATEQEETTTSLLERFNLLKEWHLNQQVNNKVKNPAMESETEPALADELKPDMSNLFARPTVTDLQKMKWNAESNKMATADDMAFIEAEFQSLGVPKENLAKVMWTLTRYCVGASSSQYLDPKGEEEKLCGGVTRAALIACIKKRSTLRKVCRLYAPIVWNYMLVNNVPPEDWQSKGYTEETKFAAFDTFDFVMNPAAIQPLEGLIRSPTKAEIIANETHKRIALDRNANNERFANLGSEITGGKFGCRVGTKWRESKCDNG.

Residues M1–N43 are disordered. The span at I9–R39 shows a compositional bias: basic and acidic residues.

It belongs to the potexviruses coat protein family.

It is found in the virion. In terms of biological role, required for genome encapsidation. Forms ribonucleoprotein complexes along with TGB1 helicase and viral RNA. This chain is Capsid protein, found in Poplar mosaic virus (isolate ATCC Pv275) (PMV).